The primary structure comprises 224 residues: UPF0758 protein ABO_0214 (224 aa).

Residues 102–224 form the MPN domain; that stretch reads PLDNPDKAGQ…WVSLASRGAV (123 aa). Zn(2+) is bound by residues His173, His175, and Asp186. The JAMM motif signature appears at 173–186; that stretch reads HNHPSGVAEPSQSD.

It belongs to the UPF0758 family.

The polypeptide is UPF0758 protein ABO_0214 (Alcanivorax borkumensis (strain ATCC 700651 / DSM 11573 / NCIMB 13689 / SK2)).